Here is a 349-residue protein sequence, read N- to C-terminus: MHRNFRKWIFYVFLCFGVLYVKLGALSSVVALGANIICNKIPGLAPRQRAICQSRPDAIIVIGEGAQMGIDECQHQFRFGRWNCSALGEKTVFGQELRVGSREAAFTYAITAAGVAHAVTAACSQGNLSNCGCDREKQGYYNQAEGWKWGGCSADVRYGIDFSRRFVDAREIKKNARRLMNLHNNEAGRKVLEDRMKLECKCHGVSGSCTTKTCWTTLPKFREVGHLLKEKYNAAVQVEVVRASRLRQPTFLRIKQLRSYQKPMETDLVYIEKSPNYCEEDAATGSVGTQGRLCNRTSPGADGCDTMCCGRGYNTHQYTKVWQCNCKFHWCCFVKCNTCSERTEVFTCK.

Residues 1 to 24 form the signal peptide; sequence MHRNFRKWIFYVFLCFGVLYVKLG. Cystine bridges form between Cys-73–Cys-84, Cys-123–Cys-131, Cys-133–Cys-152, Cys-200–Cys-214, and Cys-202–Cys-209. N-linked (GlcNAc...) asparagine glycosylation is found at Asn-83 and Asn-127. Residue Ser-206 is the site of O-palmitoleoyl serine; by PORCN attachment. The tract at residues 238-266 is disordered linker; it reads VEVVRASRLRQPTFLRIKQLRSYQKPMET. Cystine bridges form between Cys-278–Cys-309, Cys-294–Cys-304, Cys-308–Cys-348, Cys-324–Cys-339, Cys-326–Cys-336, and Cys-331–Cys-332. Asn-295 carries an N-linked (GlcNAc...) asparagine glycan.

Belongs to the Wnt family. In terms of assembly, forms a soluble 1:1 complex with AFM; this prevents oligomerization and is required for prolonged biological activity. The complex with AFM may represent the physiological form in body fluids. Interacts with FZD1 and FZD10. Interacts with FZD4 (in vitro). Interacts with PORCN. Interacts with glypican GPC3. Interacts (via intrinsically disordered linker region) with RECK; interaction with RECK confers ligand selectivity for Wnt7 in brain endothelial cells and allows these cells to selectively respond to Wnt7. Post-translationally, palmitoleoylation is required for efficient binding to frizzled receptors. Depalmitoleoylation leads to Wnt signaling pathway inhibition.

The protein localises to the secreted. The protein resides in the extracellular space. It localises to the extracellular matrix. Ligand for members of the frizzled family of seven transmembrane receptors that functions in the canonical Wnt/beta-catenin signaling pathway. Required for normal fusion of the chorion and the allantois during placenta development. Required for central nervous system (CNS) angiogenesis and blood-brain barrier regulation. The protein is Protein Wnt-7b (Wnt7b) of Mus musculus (Mouse).